We begin with the raw amino-acid sequence, 1286 residues long: ABC transporter B family member 4 (1286 aa).

The disordered stretch occupies residues 1–39 (MASESGLNGDPNILEEVSETKRDKEEEEEVKKTEKKDEE). The span at 18-39 (SETKRDKEEEEEVKKTEKKDEE) shows a compositional bias: basic and acidic residues. Residues 60–80 (FLLMILGTLGSIGNGLGFPLM) form a helical membrane-spanning segment. The ABC transmembrane type-1 1 domain maps to 63-349 (MILGTLGSIG…TSPCLSAFAA (287 aa)). Asn-94 and Asn-97 each carry an N-linked (GlcNAc...) asparagine glycan. The next 5 membrane-spanning stretches (helical) occupy residues 109–129 (FVWL…GWMI), 186–206 (IQLL…GWLL), 208–228 (LVML…AIVI), 288–308 (GLGL…AVWY), and 317–337 (GYTG…SMSL). An ABC transporter 1 domain is found at 384-620 (IELKDVYFTY…PEGAYSQLIR (237 aa)). 419–426 (GQSGSGKS) serves as a coordination point for ATP. Residues Asn-500 and Asn-571 are each glycosylated (N-linked (GlcNAc...) asparagine). Over residues 625–636 (KKSDENAAEEQK) the composition is skewed to basic and acidic residues. Positions 625-669 (KKSDENAAEEQKMSSIESFKQSSLRKSSLGRSLSKGGSSRGNSSR) are disordered. The segment covering 646 to 669 (SSLRKSSLGRSLSKGGSSRGNSSR) has biased composition (low complexity). Asn-666 carries N-linked (GlcNAc...) asparagine glycosylation. Position 671 is a phosphoserine (Ser-671). An ABC transmembrane type-1 2 domain is found at 720–1007 (LILGSISAAA…SSSLSPDSSK (288 aa)). Transmembrane regions (helical) follow at residues 721 to 741 (ILGS…GILI) and 764 to 784 (IIFM…TFFF). N-linked (GlcNAc...) asparagine glycans are attached at residues Asn-816 and Asn-846. The next 4 membrane-spanning stretches (helical) occupy residues 850 to 870 (ILAG…VVLA), 871 to 891 (MLPL…GFSA), 942 to 962 (GIVS…SYAA), and 976 to 996 (TTFD…MAIS). The ABC transporter 2 domain maps to 1042 to 1279 (IELRHVSFKY…KDGVYASLVQ (238 aa)). Residue 1077–1084 (GESGSGKS) participates in ATP binding. Residues Asn-1131 and Asn-1230 are each glycosylated (N-linked (GlcNAc...) asparagine).

It belongs to the ABC transporter superfamily. ABCB family. Multidrug resistance exporter (TC 3.A.1.201) subfamily. In terms of assembly, interacts with 1-naphthylphthalamic acid (NPA). Post-translationally, phosphorylation level varies significantly during early response to bacterial elicitor. Mostly expressed in roots, especially in the root elongation zone and lateral roots. In mature portion of the root, expressed in the epidermis and cortex. In the root elongation zone, confined to epidermis. In root tips, present in the root cap, S3 columella and epidermal cells.

The protein localises to the cell membrane. Its function is as follows. Auxin influx transporter that mediates the transport of auxin in roots. Contributes to the basipetal transport in hypocotyls and root tips by establishing an auxin uptake sink in the root cap. Confers sensitivity to 1-N-naphthylphthalamic acid (NPA). Regulates the root elongation, the initiation of lateral roots and the development of root hairs. Can transport IAA, indole-3-propionic acid, NPA syringic acid, vanillic acid and some auxin metabolites, but not 2,4-D and 1-naphthaleneacetic acid. This is ABC transporter B family member 4 (ABCB4) from Arabidopsis thaliana (Mouse-ear cress).